A 139-amino-acid polypeptide reads, in one-letter code: Large-conductance mechanosensitive channel (139 aa).

A run of 3 helical transmembrane segments spans residues V14 to A34, I38 to P58, and G82 to I102.

Belongs to the MscL family. Homopentamer.

It localises to the cell inner membrane. Functionally, channel that opens in response to stretch forces in the membrane lipid bilayer. May participate in the regulation of osmotic pressure changes within the cell. This Methylobacterium radiotolerans (strain ATCC 27329 / DSM 1819 / JCM 2831 / NBRC 15690 / NCIMB 10815 / 0-1) protein is Large-conductance mechanosensitive channel.